We begin with the raw amino-acid sequence, 462 residues long: uncharacterized protein (462 aa).

A run of 2 helical transmembrane segments spans residues 12–32 and 257–277; these read WWWL…APTV and GLCV…LELV.

Belongs to the HHV-5 US29 protein family.

It localises to the host membrane. This is an uncharacterized protein from Human cytomegalovirus (strain AD169) (HHV-5).